Consider the following 495-residue polypeptide: Glutamyl-tRNA(Gln) amidotransferase subunit A (495 aa).

Residues lysine 79 and serine 159 each act as charge relay system in the active site. Serine 183 functions as the Acyl-ester intermediate in the catalytic mechanism.

It belongs to the amidase family. GatA subfamily. As to quaternary structure, heterotrimer of A, B and C subunits.

The catalysed reaction is L-glutamyl-tRNA(Gln) + L-glutamine + ATP + H2O = L-glutaminyl-tRNA(Gln) + L-glutamate + ADP + phosphate + H(+). Its function is as follows. Allows the formation of correctly charged Gln-tRNA(Gln) through the transamidation of misacylated Glu-tRNA(Gln) in organisms which lack glutaminyl-tRNA synthetase. The reaction takes place in the presence of glutamine and ATP through an activated gamma-phospho-Glu-tRNA(Gln). This chain is Glutamyl-tRNA(Gln) amidotransferase subunit A, found in Gluconobacter oxydans (strain 621H) (Gluconobacter suboxydans).